The sequence spans 666 residues: Putative L-type lectin-domain containing receptor kinase V.1 (666 aa).

The N-terminal stretch at 1 to 18 is a signal peptide; that stretch reads MVLLLFLVLFFVPESVVC. The Extracellular portion of the chain corresponds to 19-289; it reads QRPNPNGVEF…WIQSPNGILT (271 aa). Residues 27-257 form a legume-lectin like region; the sequence is EFNTSGNMYT…SHYILGWTFK (231 aa). Residues Asn-29, Asn-74, Asn-123, Asn-176, Asn-204, and Asn-259 are each glycosylated (N-linked (GlcNAc...) asparagine). The helical transmembrane segment at 290-310 threads the bilayer; the sequence is ISLTVSGVIILIILSLSLWLF. Topologically, residues 311 to 666 are cytoplasmic; that stretch reads LKRKKLLEVL…FTESFVSHGR (356 aa). The Protein kinase domain maps to 344–625; that stretch reads FKDTEVLGKG…SVAQLPHNLL (282 aa). Residues 350 to 358 and Lys-373 contribute to the ATP site; that span reads LGKGGFGKV. The active-site Proton acceptor is Asp-469.

The protein in the C-terminal section; belongs to the protein kinase superfamily. Ser/Thr protein kinase family. It in the N-terminal section; belongs to the leguminous lectin family.

It is found in the cell membrane. It catalyses the reaction L-seryl-[protein] + ATP = O-phospho-L-seryl-[protein] + ADP + H(+). It carries out the reaction L-threonyl-[protein] + ATP = O-phospho-L-threonyl-[protein] + ADP + H(+). The sequence is that of Putative L-type lectin-domain containing receptor kinase V.1 (LECRK51) from Arabidopsis thaliana (Mouse-ear cress).